The following is a 444-amino-acid chain: Serine--tRNA ligase (444 aa).

243-245 (TAE) contributes to the L-serine binding site. 274–276 (RSE) provides a ligand contact to ATP. Glutamate 297 is an L-serine binding site. 361 to 364 (EISS) contributes to the ATP binding site. Serine 397 provides a ligand contact to L-serine.

This sequence belongs to the class-II aminoacyl-tRNA synthetase family. Type-1 seryl-tRNA synthetase subfamily. Homodimer. The tRNA molecule binds across the dimer.

It is found in the cytoplasm. It carries out the reaction tRNA(Ser) + L-serine + ATP = L-seryl-tRNA(Ser) + AMP + diphosphate + H(+). The catalysed reaction is tRNA(Sec) + L-serine + ATP = L-seryl-tRNA(Sec) + AMP + diphosphate + H(+). It functions in the pathway aminoacyl-tRNA biosynthesis; selenocysteinyl-tRNA(Sec) biosynthesis; L-seryl-tRNA(Sec) from L-serine and tRNA(Sec): step 1/1. Functionally, catalyzes the attachment of serine to tRNA(Ser). Is also able to aminoacylate tRNA(Sec) with serine, to form the misacylated tRNA L-seryl-tRNA(Sec), which will be further converted into selenocysteinyl-tRNA(Sec). This Acidobacterium capsulatum (strain ATCC 51196 / DSM 11244 / BCRC 80197 / JCM 7670 / NBRC 15755 / NCIMB 13165 / 161) protein is Serine--tRNA ligase.